Reading from the N-terminus, the 852-residue chain is Alanine--tRNA ligase (852 aa).

Zn(2+)-binding residues include His554, His558, Cys656, and His660.

It belongs to the class-II aminoacyl-tRNA synthetase family. The cofactor is Zn(2+).

Its subcellular location is the cytoplasm. The enzyme catalyses tRNA(Ala) + L-alanine + ATP = L-alanyl-tRNA(Ala) + AMP + diphosphate. Functionally, catalyzes the attachment of alanine to tRNA(Ala) in a two-step reaction: alanine is first activated by ATP to form Ala-AMP and then transferred to the acceptor end of tRNA(Ala). Also edits incorrectly charged Ser-tRNA(Ala) and Gly-tRNA(Ala) via its editing domain. The polypeptide is Alanine--tRNA ligase (Campylobacter concisus (strain 13826)).